The chain runs to 126 residues: Histone H2B type 1-M (126 aa).

The segment at 1–36 (MPEPVKSAPVPKKGSKKAINKAQKKDGKKRKRSRKE) is disordered. An N-acetylproline modification is found at proline 2. Position 3 is an ADP-ribosyl glutamic acid (glutamate 3). Lysine 6 is modified (N6-(2-hydroxyisobutyryl)lysine; alternate). Position 6 is an N6-(beta-hydroxybutyryl)lysine; alternate (lysine 6). At lysine 6 the chain carries N6-acetyllysine; alternate. Lysine 6 bears the N6-butyryllysine; alternate mark. At lysine 6 the chain carries N6-crotonyllysine; alternate. Position 6 is an N6-lactoyllysine; alternate (lysine 6). Residue lysine 6 forms a Glycyl lysine isopeptide (Lys-Gly) (interchain with G-Cter in SUMO2); alternate linkage. An ADP-ribosylserine modification is found at serine 7. Lysine 12 is subject to N6-(beta-hydroxybutyryl)lysine; alternate. N6-acetyllysine; alternate is present on residues lysine 12 and lysine 13. An N6-crotonyllysine; alternate mark is found at lysine 12 and lysine 13. An N6-lactoyllysine; alternate modification is found at lysine 12. At lysine 13 the chain carries N6-(2-hydroxyisobutyryl)lysine; alternate. Serine 15 bears the Phosphoserine; by STK4/MST1 mark. N6-acetyllysine; alternate occurs at positions 16, 17, 21, and 24. N6-crotonyllysine; alternate is present on residues lysine 16, lysine 17, lysine 21, and lysine 24. Residues lysine 16, lysine 17, lysine 21, and lysine 24 each carry the N6-lactoyllysine; alternate modification. Lysine 17 and lysine 21 each carry N6-(beta-hydroxybutyryl)lysine; alternate. The residue at position 17 (lysine 17) is an N6-glutaryllysine; alternate. Lysine 21 and lysine 24 each carry N6-(2-hydroxyisobutyryl)lysine; alternate. Lysine 21 bears the N6-butyryllysine; alternate mark. Residue lysine 21 forms a Glycyl lysine isopeptide (Lys-Gly) (interchain with G-Cter in SUMO2); alternate linkage. At lysine 25 the chain carries N6-(2-hydroxyisobutyryl)lysine. Position 35 is an N6-(2-hydroxyisobutyryl)lysine; alternate (lysine 35). Lysine 35 is modified (N6-(beta-hydroxybutyryl)lysine; alternate). The residue at position 35 (lysine 35) is an N6-crotonyllysine; alternate. Lysine 35 is subject to N6-glutaryllysine; alternate. Lysine 35 carries the N6-succinyllysine; alternate modification. A Glycyl lysine isopeptide (Lys-Gly) (interchain with G-Cter in ubiquitin); alternate cross-link involves residue lysine 35. Glutamate 36 carries the polyADP-ribosyl glutamic acid modification. Serine 37 bears the Phosphoserine; by AMPK mark. Lysine 44, lysine 47, and lysine 58 each carry N6-(2-hydroxyisobutyryl)lysine; alternate. Position 44 is an N6-lactoyllysine; alternate (lysine 44). N6-glutaryllysine; alternate is present on residues lysine 44 and lysine 47. The residue at position 47 (lysine 47) is an N6-methyllysine; alternate. Residue lysine 58 is modified to N6,N6-dimethyllysine; alternate. The residue at position 80 (arginine 80) is a Dimethylated arginine. N6-(2-hydroxyisobutyryl)lysine; alternate is present on lysine 86. Position 86 is an N6-(beta-hydroxybutyryl)lysine; alternate (lysine 86). N6-acetyllysine; alternate is present on lysine 86. Position 86 is an N6-lactoyllysine; alternate (lysine 86). The residue at position 86 (lysine 86) is an N6,N6,N6-trimethyllysine; alternate. 2 positions are modified to omega-N-methylarginine: arginine 87 and arginine 93. At lysine 109 the chain carries N6-(2-hydroxyisobutyryl)lysine; alternate. Position 109 is an N6-lactoyllysine; alternate (lysine 109). Position 109 is an N6-glutaryllysine; alternate (lysine 109). Residue lysine 109 is modified to N6-methyllysine; alternate. O-linked (GlcNAc) serine glycosylation occurs at serine 113. Threonine 116 is modified (phosphothreonine). An N6-(2-hydroxyisobutyryl)lysine; alternate mark is found at lysine 117 and lysine 121. N6-(beta-hydroxybutyryl)lysine; alternate occurs at positions 117 and 121. 2 positions are modified to N6-lactoyllysine; alternate: lysine 117 and lysine 121. Residues lysine 117 and lysine 121 each carry the N6-glutaryllysine; alternate modification. N6-succinyllysine; alternate is present on residues lysine 117 and lysine 121. Position 117 is an N6-malonyllysine; alternate (lysine 117). Lysine 117 carries the post-translational modification N6-methylated lysine; alternate. Residue lysine 121 forms a Glycyl lysine isopeptide (Lys-Gly) (interchain with G-Cter in ubiquitin); alternate linkage.

Belongs to the histone H2B family. The nucleosome is a histone octamer containing two molecules each of H2A, H2B, H3 and H4 assembled in one H3-H4 heterotetramer and two H2A-H2B heterodimers. The octamer wraps approximately 147 bp of DNA. Monoubiquitination at Lys-35 (H2BK34Ub) by the MSL1/MSL2 dimer is required for histone H3 'Lys-4' (H3K4me) and 'Lys-79' (H3K79me) methylation and transcription activation at specific gene loci, such as HOXA9 and MEIS1 loci. Similarly, monoubiquitination at Lys-121 (H2BK120Ub) by the RNF20/40 complex gives a specific tag for epigenetic transcriptional activation and is also prerequisite for histone H3 'Lys-4' and 'Lys-79' methylation. It also functions cooperatively with the FACT dimer to stimulate elongation by RNA polymerase II. H2BK120Ub also acts as a regulator of mRNA splicing: deubiquitination by USP49 is required for efficient cotranscriptional splicing of a large set of exons. Post-translationally, phosphorylation at Ser-37 (H2BS36ph) by AMPK in response to stress promotes transcription. Phosphorylated on Ser-15 (H2BS14ph) by STK4/MST1 during apoptosis; which facilitates apoptotic chromatin condensation. Also phosphorylated on Ser-15 in response to DNA double strand breaks (DSBs), and in correlation with somatic hypermutation and immunoglobulin class-switch recombination. In terms of processing, glcNAcylation at Ser-113 promotes monoubiquitination of Lys-121. It fluctuates in response to extracellular glucose, and associates with transcribed genes. ADP-ribosylated by PARP1 or PARP2 on Ser-7 (H2BS6ADPr) in response to DNA damage. H2BS6ADPr promotes recruitment of CHD1L. Mono-ADP-ribosylated on Glu-3 (H2BE2ADPr) by PARP3 in response to single-strand breaks. Poly ADP-ribosylation on Glu-36 (H2BE35ADPr) by PARP1 regulates adipogenesis: it inhibits phosphorylation at Ser-37 (H2BS36ph), thereby blocking expression of pro-adipogenetic genes. Post-translationally, crotonylation (Kcr) is specifically present in male germ cells and marks testis-specific genes in post-meiotic cells, including X-linked genes that escape sex chromosome inactivation in haploid cells. Crotonylation marks active promoters and enhancers and confers resistance to transcriptional repressors. It is also associated with post-meiotically activated genes on autosomes. In terms of processing, lactylated in macrophages by EP300/P300 by using lactoyl-CoA directly derived from endogenous or exogenous lactate, leading to stimulates gene transcription.

The protein localises to the nucleus. It localises to the chromosome. Its function is as follows. Core component of nucleosome. Nucleosomes wrap and compact DNA into chromatin, limiting DNA accessibility to the cellular machineries which require DNA as a template. Histones thereby play a central role in transcription regulation, DNA repair, DNA replication and chromosomal stability. DNA accessibility is regulated via a complex set of post-translational modifications of histones, also called histone code, and nucleosome remodeling. The sequence is that of Histone H2B type 1-M from Homo sapiens (Human).